We begin with the raw amino-acid sequence, 153 residues long: MTSEQTFIAIKPDGVQRGLVGPIISRFENRGFKLAAMKLTSPSRSLLEQHYSDLKEKPFFPGLVTYMLSGPIVAMVWEGKDVVKTGRTILGATNPLASAPGTIRGDFAIDVGRNVCHGSDSVESAKKEIGLWFTPEEIQNYKLNAFGWIYEKE.

ATP-binding residues include K11, F59, R87, T93, R104, and N114. H117 acts as the Pros-phosphohistidine intermediate in catalysis.

Belongs to the NDK family. It depends on Mg(2+) as a cofactor.

The catalysed reaction is a 2'-deoxyribonucleoside 5'-diphosphate + ATP = a 2'-deoxyribonucleoside 5'-triphosphate + ADP. It carries out the reaction a ribonucleoside 5'-diphosphate + ATP = a ribonucleoside 5'-triphosphate + ADP. Its function is as follows. Major role in the synthesis of nucleoside triphosphates other than ATP. The ATP gamma phosphate is transferred to the NDP beta phosphate via a ping-pong mechanism, using a phosphorylated active-site intermediate. The polypeptide is Nucleoside diphosphate kinase (swoH) (Emericella nidulans (strain FGSC A4 / ATCC 38163 / CBS 112.46 / NRRL 194 / M139) (Aspergillus nidulans)).